The following is a 54-amino-acid chain: Large ribosomal subunit protein bL33B (54 aa).

The protein belongs to the bacterial ribosomal protein bL33 family.

The polypeptide is Large ribosomal subunit protein bL33B (Myxococcus xanthus (strain DK1622)).